The sequence spans 462 residues: TNF receptor-associated factor family protein DDB_G0267754 (462 aa).

The RING-type; degenerate zinc finger occupies 24-62; the sequence is CCVCECLLIEALQCRNGHVACKNCFIKIVKSKKECMTCR. The segment at 104 to 127 is disordered; the sequence is KNGNGNEGSSANEIEQPQQPQQQQ. 2 TRAF-type zinc fingers span residues 150-217 and 214-273; these read SHLK…SHTE and SHTE…NQLA. The region spanning 326–449 is the MATH domain; sequence MFRGKWVISN…NDTLTINFSI (124 aa).

The protein belongs to the TNF receptor-associated factor family. A subfamily.

Its subcellular location is the cytoplasm. Probable adapter protein and signal transducer that links members of the tumor necrosis factor receptor family to different signaling pathways by association with the receptor cytoplasmic domain and kinases. This chain is TNF receptor-associated factor family protein DDB_G0267754, found in Dictyostelium discoideum (Social amoeba).